A 490-amino-acid polypeptide reads, in one-letter code: Katanin p60 ATPase-containing subunit A-like 1 (490 aa).

Residue M1 is modified to N-acetylmethionine. Residues S87–D182 form a disordered region. Residues S116–M127 show a composition bias toward basic and acidic residues. A compositionally biased stretch (low complexity) spans A128–A139. The span at S143–M169 shows a compositional bias: basic and acidic residues. S174 is modified (phosphoserine). An ATP-binding site is contributed by G248 to T255.

Belongs to the AAA ATPase family. Katanin p60 subunit A1 subfamily. A-like 1 sub-subfamily. Interacts with KATNB1 and KATNBL1.

The protein localises to the cytoplasm. It localises to the cytoskeleton. Its subcellular location is the spindle pole. The protein resides in the spindle. The catalysed reaction is n ATP + n H2O + a microtubule = n ADP + n phosphate + (n+1) alpha/beta tubulin heterodimers.. Regulates microtubule dynamics in Sertoli cells, a process that is essential for spermiogenesis and male fertility. Severs microtubules in an ATP-dependent manner, promoting rapid reorganization of cellular microtubule arrays. Has microtubule-severing activity in vitro. This is Katanin p60 ATPase-containing subunit A-like 1 from Otolemur garnettii (Small-eared galago).